The sequence spans 45 residues: Movement protein P3a (45 aa).

A helical transmembrane segment spans residues 9–29; that stretch reads FALGFSSAIPFSVAGLYFVYL.

This sequence belongs to the polerovirus movement protein P3a family. Homodimer. Heterodimer with movement protein P17.

Its subcellular location is the host cell junction. It localises to the host plasmodesma. The protein resides in the host Golgi apparatus. It is found in the host chloroplast envelope. The protein localises to the host mitochondrion outer membrane. Its function is as follows. Together with movement protein P17, plays an essential role in virus long distance movement. In Solanum tuberosum (Potato), this protein is Movement protein P3a (ORF3a).